The chain runs to 125 residues: Translation initiation factor 5A (125 aa).

K35 is subject to Hypusine.

This sequence belongs to the eIF-5A family.

It is found in the cytoplasm. In terms of biological role, functions by promoting the formation of the first peptide bond. In Methanoculleus marisnigri (strain ATCC 35101 / DSM 1498 / JR1), this protein is Translation initiation factor 5A (eIF5A).